The chain runs to 160 residues: 2-C-methyl-D-erythritol 2,4-cyclodiphosphate synthase (160 aa).

Residues Asp10 and His12 each coordinate a divalent metal cation. Residues 10–12 (DVH) and 36–37 (HS) each bind 4-CDP-2-C-methyl-D-erythritol 2-phosphate. His44 lines the a divalent metal cation pocket. 4-CDP-2-C-methyl-D-erythritol 2-phosphate contacts are provided by residues 58–60 (DIG), 134–137 (TTTE), Phe141, and Arg144.

Belongs to the IspF family. Homotrimer. A divalent metal cation is required as a cofactor.

It carries out the reaction 4-CDP-2-C-methyl-D-erythritol 2-phosphate = 2-C-methyl-D-erythritol 2,4-cyclic diphosphate + CMP. Its pathway is isoprenoid biosynthesis; isopentenyl diphosphate biosynthesis via DXP pathway; isopentenyl diphosphate from 1-deoxy-D-xylulose 5-phosphate: step 4/6. Its function is as follows. Involved in the biosynthesis of isopentenyl diphosphate (IPP) and dimethylallyl diphosphate (DMAPP), two major building blocks of isoprenoid compounds. Catalyzes the conversion of 4-diphosphocytidyl-2-C-methyl-D-erythritol 2-phosphate (CDP-ME2P) to 2-C-methyl-D-erythritol 2,4-cyclodiphosphate (ME-CPP) with a corresponding release of cytidine 5-monophosphate (CMP). The chain is 2-C-methyl-D-erythritol 2,4-cyclodiphosphate synthase from Phocaeicola vulgatus (strain ATCC 8482 / DSM 1447 / JCM 5826 / CCUG 4940 / NBRC 14291 / NCTC 11154) (Bacteroides vulgatus).